The chain runs to 533 residues: uncharacterized protein (533 aa).

Residues 1–21 (MVKVWKIGFGVFLPTALLFSA) form the signal peptide. Cysteine 22 carries N-palmitoyl cysteine lipidation. Cysteine 22 is lipidated: S-diacylglycerol cysteine. A disordered region spans residues 91–111 (LSKNKEGQTASQTRSSSEQTT). Over residues 97–111 (GQTASQTRSSSEQTT) the composition is skewed to polar residues.

This sequence belongs to the MG067/MG068/MG395 family.

The protein resides in the cell membrane. This is an uncharacterized protein from Mycoplasma pneumoniae (strain ATCC 29342 / M129 / Subtype 1) (Mycoplasmoides pneumoniae).